The following is a 369-amino-acid chain: Protein-glutamate methylesterase/protein-glutamine glutaminase of group 3 operon (369 aa).

The region spanning 11–128 (RVLIVDDSAA…DLERQEASIR (118 aa)) is the Response regulatory domain. Asp-62 bears the 4-aspartylphosphate mark. Residues 136–168 (ATETTRRRSQPEPRPLAPGPKLTADEILPARPP) are disordered. The region spanning 170–358 (PVPETMPVVC…LDRLAARIME (189 aa)) is the CheB-type methylesterase domain. Residues Ser-183, His-209, and Asp-305 contribute to the active site.

This sequence belongs to the CheB family. In terms of processing, phosphorylated in vitro by CheA2, but not by CheA1. Phosphorylation of the N-terminal regulatory domain activates the methylesterase activity.

The protein resides in the cytoplasm. The catalysed reaction is [protein]-L-glutamate 5-O-methyl ester + H2O = L-glutamyl-[protein] + methanol + H(+). It catalyses the reaction L-glutaminyl-[protein] + H2O = L-glutamyl-[protein] + NH4(+). Its function is as follows. Involved in chemotaxis. Part of a chemotaxis signal transduction system that modulates chemotaxis in response to various stimuli. Catalyzes the demethylation of specific methylglutamate residues introduced into the chemoreceptors (methyl-accepting chemotaxis proteins or MCP) by CheR. Also mediates the irreversible deamidation of specific glutamine residues to glutamic acid. This Cereibacter sphaeroides (Rhodobacter sphaeroides) protein is Protein-glutamate methylesterase/protein-glutamine glutaminase of group 3 operon (cheB3).